A 270-amino-acid polypeptide reads, in one-letter code: MNTEIPDLEKQQIDHNSGSDDPQPIHDDMAPVSRIRSSGPNHEYIHIADQKFHRDDFYRAFGGTLNPGGAPQPSRKFGNPAPLGLSAFALTTLVFSLCTVQARGVPNPSIAVGLALFYGGVCQFAAGMWEFVQENTFGAAALTSYGGFWMSWAAIEMNAFGIKDSYNDPIEVQNAVGIYLFGWFIFTLMLTLCTLKSTVAFFGLFFMLMMTFLVLACANVTQHHGTAIGGGWLGIITAFFGFYNAYAGLANPGNSYIVPVPLDMPFVKKD.

The interval 1 to 33 is disordered; it reads MNTEIPDLEKQQIDHNSGSDDPQPIHDDMAPVS. Phosphotyrosine is present on Tyr-58. A Phosphoserine modification is found at Ser-74. Helical transmembrane passes span 80–100, 109–129, 137–157, 175–195, 198–218, and 227–247; these read PAPL…LCTV, SIAV…AGMW, FGAA…AIEM, AVGI…LCTL, TVAF…LACA, and AIGG…NAYA.

This sequence belongs to the acetate uptake transporter (AceTr) (TC 2.A.96) family.

It is found in the membrane. In terms of biological role, plays a role in the adaptation of cell metabolism to the utilization of acetic acid, possibly by inhibiting an anion-transporting ATPase and affecting the plasma membrane H(+)-ATPase. May be indirectly involved in the repression of genes encoding glyoxylate cycle enzymes. The chain is Glyoxylate pathway regulator (GPR1) from Yarrowia lipolytica (strain CLIB 122 / E 150) (Yeast).